The primary structure comprises 183 residues: Oleosin Bn-V (183 aa).

The tract at residues 1–47 is polar; the sequence is PARTHHDITTRDQYPLISRDRDQYGMIGRDQYNMSGQNYSKSRQIAK. 2 repeats span residues 11–20 and 21–30; these read RDQYPLISRD and RDQYGMIGRD. The interval 48–119 is hydrophobic; it reads ATTAVTAGDS…AAITVFSWIY (72 aa). Helical transmembrane passes span 57–77 and 99–119; these read SLLV…IVAT and TGFL…SWIY. The disordered stretch occupies residues 154 to 183; the sequence is YGQQHTGEEHDRDRDHRTDRDRTRGTQHTT. Positions 159-177 are enriched in basic and acidic residues; it reads TGEEHDRDRDHRTDRDRTR.

It belongs to the oleosin family.

The protein localises to the lipid droplet. Its subcellular location is the membrane. May have a structural role to stabilize the lipid body during desiccation of the seed by preventing coalescence of the oil. Probably interacts with both lipid and phospholipid moieties of lipid bodies. May also provide recognition signals for specific lipase anchorage in lipolysis during seedling growth. This is Oleosin Bn-V from Brassica napus (Rape).